Here is an 848-residue protein sequence, read N- to C-terminus: Alanine--tRNA ligase (848 aa).

Residues His-553, His-557, Cys-654, and His-658 each contribute to the Zn(2+) site.

The protein belongs to the class-II aminoacyl-tRNA synthetase family. Requires Zn(2+) as cofactor.

It localises to the cytoplasm. The enzyme catalyses tRNA(Ala) + L-alanine + ATP = L-alanyl-tRNA(Ala) + AMP + diphosphate. Its function is as follows. Catalyzes the attachment of alanine to tRNA(Ala) in a two-step reaction: alanine is first activated by ATP to form Ala-AMP and then transferred to the acceptor end of tRNA(Ala). Also edits incorrectly charged Ser-tRNA(Ala) and Gly-tRNA(Ala) via its editing domain. This chain is Alanine--tRNA ligase, found in Neorickettsia sennetsu (strain ATCC VR-367 / Miyayama) (Ehrlichia sennetsu).